A 211-amino-acid polypeptide reads, in one-letter code: Probable endo-1,4-beta-xylanase 5 (211 aa).

The signal sequence occupies residues methionine 1 to alanine 16. The GH11 domain maps to alanine 19–serine 210. The active-site Nucleophile is the glutamate 106. Residue glutamate 197 is the Proton donor of the active site.

It belongs to the glycosyl hydrolase 11 (cellulase G) family.

It is found in the secreted. The catalysed reaction is Endohydrolysis of (1-&gt;4)-beta-D-xylosidic linkages in xylans.. The protein operates within glycan degradation; xylan degradation. In terms of biological role, endo-1,4-beta-xylanase involved in the hydrolysis of xylan, a major structural heterogeneous polysaccharide found in plant biomass representing the second most abundant polysaccharide in the biosphere, after cellulose. This is Probable endo-1,4-beta-xylanase 5 (XYN5) from Aspergillus niger (strain ATCC MYA-4892 / CBS 513.88 / FGSC A1513).